The chain runs to 310 residues: MTELDEVDSLRSDGDSWTVTESVGATALGVAAARAVETAGANPLIRDEFAPILVSSAGPAWARLADPDIGWLDDDPHGQRLHRLGCDYQAVRTHFFDEYFAAAAGAGIEQAVILAAGLDCRAYRLNWPPEAVVFEIDQPKVLEYKAQILESHGVTAAATRHGVAVDLREDWPAALLRAGFDRDRPTAWLAEGLLPYLPGDAQDRLFEMITDLSAPRSRIAVESFTMNLTGNKQRWNRMRDRLGLDINVEALTYREPGRADAAEWLANHGWQVYSVSNREEMARLGRPVPEDLVDEAITTTLLRASLEISR.

S-adenosyl-L-methionine contacts are provided by residues Asp-137 and 166-167; that span reads DL.

This sequence belongs to the UPF0677 family.

Exhibits S-adenosyl-L-methionine-dependent methyltransferase activity. This is Putative S-adenosyl-L-methionine-dependent methyltransferase MMAR_0356 from Mycobacterium marinum (strain ATCC BAA-535 / M).